The chain runs to 327 residues: rRNA 2'-O-methyltransferase fibrillarin (327 aa).

The tract at residues 1 to 95 is disordered; that stretch reads MKPGFSPRGG…NQSGKNVMVE (95 aa). Residues 7–80 are compositionally biased toward gly residues; that stretch reads PRGGGFGGRG…GGNRGRGGGR (74 aa). Asymmetric dimethylarginine occurs at positions 8, 15, 21, 24, 28, and 31. Residues Lys-90, Lys-108, and Lys-115 each participate in a glycyl lysine isopeptide (Lys-Gly) (interchain with G-Cter in SUMO2) cross-link. Lys-108 carries the post-translational modification N6-acetyllysine. At Ser-122 the chain carries Phosphoserine. Lys-127 bears the N6-acetyllysine mark. Ser-130 and Ser-132 each carry phosphoserine. Glycyl lysine isopeptide (Lys-Gly) (interchain with G-Cter in SUMO2) cross-links involve residues Lys-137, Lys-149, and Lys-164. S-adenosyl-L-methionine-binding positions include 178 to 179 and 197 to 198; these read TT and EF. An N6-acetyllysine mark is found at Lys-211 and Lys-212. S-adenosyl-L-methionine is bound by residues 222 to 223 and 242 to 245; these read DA and DVAQ.

Belongs to the methyltransferase superfamily. Fibrillarin family. In terms of assembly, component of box C/D small nucleolar ribonucleoprotein (snoRNP) particles that contain SNU13, FBL, NOP5 and NOP56, plus a guide RNA. It is associated with the U3, U8, U13, X and Y small nuclear RNAs. Component of several ribosomal and nucleolar protein complexes. Part of the small subunit (SSU) processome, composed of more than 70 proteins and the RNA chaperone small nucleolar RNA (snoRNA) U3. Interacts with PRMT5 and UTP20. Interacts with DDX5 and C1QBP. Interacts with NOL11. Interacts with PIH1D1. Interacts with RRP1B. Interacts with NOLC1. Interacts with SDE2. Interacts with NOP2 and NOP56. Post-translationally, by homology to other fibrillarins, some or all of the N-terminal domain arginines are modified to asymmetric dimethylarginine (DMA). In terms of processing, ubiquitinated. Ubiquitination leads to proteasomal degradation. Deubiquitinated by USP36. Acetylated by CREBBP/CBP, preventing methylation of 'Gln-105' of histone H2A (H2AQ104me), without affecting rRNA methylation. Deacetylation by SIRT7 restores methylation of 'Gln-105' of histone H2A (H2AQ104me).

The protein localises to the nucleus. The protein resides in the nucleolus. It is found in the nucleoplasm. It carries out the reaction L-glutaminyl-[histone H2A] + S-adenosyl-L-methionine = N(5)-methyl-L-glutaminyl-[histone H2A] + S-adenosyl-L-homocysteine + H(+). The enzyme catalyses a ribonucleotide in rRNA + S-adenosyl-L-methionine = a 2'-O-methylribonucleotide in rRNA + S-adenosyl-L-homocysteine + H(+). The catalysed reaction is a ribonucleotide in U6 snRNA + S-adenosyl-L-methionine = a 2'-O-methylribonucleotide in U6 snRNA + S-adenosyl-L-homocysteine + H(+). Functionally, S-adenosyl-L-methionine-dependent methyltransferase that has the ability to methylate both RNAs and proteins. Involved in pre-rRNA processing by catalyzing the site-specific 2'-hydroxyl methylation of ribose moieties in pre-ribosomal RNA. Site specificity is provided by a guide RNA that base pairs with the substrate. Methylation occurs at a characteristic distance from the sequence involved in base pairing with the guide RNA. Probably catalyzes 2'-O-methylation of U6 snRNAs in box C/D RNP complexes. U6 snRNA 2'-O-methylation is required for mRNA splicing fidelity. Also acts as a protein methyltransferase by mediating methylation of 'Gln-105' of histone H2A (H2AQ104me), a modification that impairs binding of the FACT complex and is specifically present at 35S ribosomal DNA locus. Part of the small subunit (SSU) processome, first precursor of the small eukaryotic ribosomal subunit. During the assembly of the SSU processome in the nucleolus, many ribosome biogenesis factors, an RNA chaperone and ribosomal proteins associate with the nascent pre-rRNA and work in concert to generate RNA folding, modifications, rearrangements and cleavage as well as targeted degradation of pre-ribosomal RNA by the RNA exosome. The chain is rRNA 2'-O-methyltransferase fibrillarin from Mus musculus (Mouse).